Consider the following 415-residue polypeptide: Methylmalonic aciduria type A homolog, mitochondrial (415 aa).

A mitochondrion-targeting transit peptide spans 1–62 (MTISTLLLSP…LLSDGFRRTL (62 aa)). GTP contacts are provided by residues 147-155 (GPPGAGKST), aspartate 289, and 325-327 (SAR).

The protein belongs to the SIMIBI class G3E GTPase family. ArgK/MeaB subfamily. As to quaternary structure, homodimer. Interacts with MMUT (the apoenzyme form); the interaction is GTP dependent.

The protein localises to the mitochondrion. Its subcellular location is the cytoplasm. The enzyme catalyses GTP + H2O = GDP + phosphate + H(+). GTPase activity is stimulated by MMUT. Its function is as follows. GTPase, binds and hydrolyzes GTP. Involved in intracellular vitamin B12 metabolism, mediates the transport of cobalamin (Cbl) into mitochondria for the final steps of adenosylcobalamin (AdoCbl) synthesis. Functions as a G-protein chaperone that assists AdoCbl cofactor delivery from MMAB to the methylmalonyl-CoA mutase (MMUT). Plays a dual role as both a protectase and a reactivase for MMUT. Protects MMUT from progressive inactivation by oxidation by decreasing the rate of the formation of the oxidized inactive cofactor hydroxocobalamin (OH2Cbl). Additionally acts a reactivase by promoting the replacement of OH2Cbl by the active cofactor AdoCbl, restoring the activity of MMUT in the presence and hydrolysis of GTP. The protein is Methylmalonic aciduria type A homolog, mitochondrial of Mus musculus (Mouse).